Consider the following 485-residue polypeptide: Phenylalanine--tRNA ligase alpha subunit, cytoplasmic (485 aa).

Residues Thr-318, 360-362 (QIE), and Tyr-400 each bind L-phenylalanine. Glu-402 contacts Mg(2+). Position 426 (Phe-426) interacts with L-phenylalanine.

Belongs to the class-II aminoacyl-tRNA synthetase family. Phe-tRNA synthetase alpha subunit type 2 subfamily. As to quaternary structure, tetramer of two alpha and two beta subunits. The cofactor is Mg(2+).

It localises to the cytoplasm. The protein localises to the cytosol. The enzyme catalyses tRNA(Phe) + L-phenylalanine + ATP = L-phenylalanyl-tRNA(Phe) + AMP + diphosphate + H(+). This chain is Phenylalanine--tRNA ligase alpha subunit, cytoplasmic, found in Arabidopsis thaliana (Mouse-ear cress).